Reading from the N-terminus, the 108-residue chain is UPF0102 protein Sden_0272 (108 aa).

The protein belongs to the UPF0102 family.

This is UPF0102 protein Sden_0272 from Shewanella denitrificans (strain OS217 / ATCC BAA-1090 / DSM 15013).